Reading from the N-terminus, the 348-residue chain is 4-hydroxyphenylpyruvate dioxygenase (348 aa).

2 VOC domains span residues 11-141 and 151-303; these read GFAF…ITSP and AIDH…IFTE. Residues His154, His232, and Glu312 each contribute to the Fe cation site.

Belongs to the 4HPPD family. Fe cation is required as a cofactor.

The catalysed reaction is 3-(4-hydroxyphenyl)pyruvate + O2 = homogentisate + CO2. Functionally, catalyzes the transformation of p-hydroxyphenylpyruvate into HGA. Has hemolytic and brown pigment production activity. This chain is 4-hydroxyphenylpyruvate dioxygenase (lly), found in Legionella pneumophila subsp. pneumophila (strain Philadelphia 1 / ATCC 33152 / DSM 7513).